A 441-amino-acid chain; its full sequence is Hydroxycinnamoyl-CoA:5-hydroxyanthranilate N-hydroxycinnamoyltransferase HHT1 (441 aa).

Active-site proton acceptor residues include His158 and Asp388.

The protein belongs to the plant acyltransferase family.

The enzyme catalyses 5-hydroxyanthranilate + (E)-4-coumaroyl-CoA = avenanthramide A + CoA. It carries out the reaction 5-hydroxyanthranilate + (E)-caffeoyl-CoA = avenanthramide C + CoA. Its function is as follows. Involved in the biosynthesis of avenanthramide phytoalexins, which are phenolic alkaloids found mainly in oats. Catalyzes the N-acylation of 5-hydroxyanthranilate with 4-coumaroyl-CoA or caffeoyl-CoA as acyl donors, forming avenanthramide A and avenanthramide C, respectively. Does not accept feruloyl-CoA as a substrate. In Avena sativa (Oat), this protein is Hydroxycinnamoyl-CoA:5-hydroxyanthranilate N-hydroxycinnamoyltransferase HHT1.